The primary structure comprises 1104 residues: Extended synaptotagmin-1 (1104 aa).

Position 1 is an N-acetylmethionine (methionine 1). Over methionine 1–serine 38 the chain is Cytoplasmic. The disordered stretch occupies residues methionine 1 to alanine 48. A compositionally biased stretch (gly residues) spans glycine 37–alanine 47. Residues glycine 39–glycine 59 form a helical membrane-spanning segment. At arginine 60–leucine 62 the chain is on the lumenal side. Residues leucine 63 to phenylalanine 83 form a helical membrane-spanning segment. The Cytoplasmic portion of the chain corresponds to glycine 84–serine 1104. Residues tryptophan 91–threonine 116 adopt a coiled-coil conformation. Residues aspartate 135–valine 313 form the SMP-LTD domain. C2 domains lie at leucine 312–phenylalanine 433, glutamine 460–serine 580, serine 627–leucine 751, and leucine 777–serine 899. At serine 324 the chain carries Phosphoserine; by CDK5. Ca(2+) contacts are provided by lysine 344, aspartate 345, aspartate 357, aspartate 404, aspartate 406, aspartate 408, aspartate 410, and aspartate 411. The disordered stretch occupies residues valine 617–serine 641. Lysine 817 carries the N6-acetyllysine modification. Phosphoserine occurs at positions 820 and 941. A disordered region spans residues serine 924–serine 950. A compositionally biased stretch (low complexity) spans histidine 925–histidine 946. Threonine 948 is modified (phosphothreonine). 2 positions are modified to phosphoserine: serine 949 and serine 963. Residues proline 971–tyrosine 1093 form the C2 5 domain. The residue at position 1009 (tyrosine 1009) is a Phosphotyrosine. The interval lysine 1018–arginine 1025 is required for phosphatidylinositol 4,5-bisphosphate-dependent location at the cell membrane. Residue serine 1034 is modified to Phosphoserine.

This sequence belongs to the extended synaptotagmin family. In terms of assembly, interacts with ESYT2 and ESYT3. Interacts with ADGRD1; inhibiting the G-protein-coupled receptor activity of ADGRD1. Interaction with ADGRD1 is abolished when cytosolic calcium increases, relieving ADGRD1 G-protein-coupled receptor activity. Interacts (phosphorylated form) with SLC2A4. In terms of processing, phosphorylated on Ser residues in insulin-treated adipocytes (in vitro); this promotes interaction with SLC2A4. As to expression, widely expressed.

Its subcellular location is the endoplasmic reticulum membrane. It is found in the cell membrane. In terms of biological role, binds calcium (via the C2 domains) and translocates to sites of contact between the endoplasmic reticulum and the cell membrane in response to increased cytosolic calcium levels. Helps tether the endoplasmic reticulum to the cell membrane and promotes the formation of appositions between the endoplasmic reticulum and the cell membrane. Acts as an inhibitor of ADGRD1 G-protein-coupled receptor activity in absence of cytosolic calcium. Binds glycerophospholipids in a barrel-like domain and may play a role in cellular lipid transport. In Homo sapiens (Human), this protein is Extended synaptotagmin-1.